The following is a 310-amino-acid chain: 2-dehydropantoate 2-reductase (310 aa).

NADP(+) is bound by residues 9–14 (GVGAIG) and Asn-100. Asn-100 lines the substrate pocket. Lys-184 (proton donor) is an active-site residue. Residues Asn-188, Asn-192, and Ser-259 each contribute to the substrate site. Glu-270 is an NADP(+) binding site.

It belongs to the ketopantoate reductase family.

The protein resides in the cytoplasm. The catalysed reaction is (R)-pantoate + NADP(+) = 2-dehydropantoate + NADPH + H(+). It participates in cofactor biosynthesis; (R)-pantothenate biosynthesis; (R)-pantoate from 3-methyl-2-oxobutanoate: step 2/2. In terms of biological role, catalyzes the NADPH-dependent reduction of ketopantoate into pantoic acid. This is 2-dehydropantoate 2-reductase from Aquifex aeolicus (strain VF5).